The sequence spans 595 residues: Protein UL31 (595 aa).

Residues 1–23 form the signal peptide; the sequence is MGDKPTLVTLLTVAVSSPPPSSP. Residues 47-94 are disordered; it reads TATSEVGEKTAEQEVAAADPETGNERRENRENEGGETRTTGTTAVKRS. Over residues 69–82 the composition is skewed to basic and acidic residues; it reads GNERRENRENEGGE. Residues N176 and N197 are each glycosylated (N-linked (GlcNAc...) asparagine; by host).

The protein belongs to the herpesviridae U10 family. In terms of assembly, interacts with host CGAS.

Its subcellular location is the host cytoplasm. It localises to the host nucleus. Its function is as follows. Plays a role in the inhibition of host innate immune system by targeting host CGAS and promoting dissociation of DNA from CGAS, thereby inhibiting the enzymatic activity of CGAS. The chain is Protein UL31 from Homo sapiens (Human).